The following is a 208-amino-acid chain: Thiamine-phosphate synthase (208 aa).

4-amino-2-methyl-5-(diphosphooxymethyl)pyrimidine contacts are provided by residues glutamine 37–arginine 39 and asparagine 70. The Mg(2+) site is built by aspartate 71 and aspartate 90. Position 109 (threonine 109) interacts with 4-amino-2-methyl-5-(diphosphooxymethyl)pyrimidine. Threonine 135 to serine 137 contributes to the 2-[(2R,5Z)-2-carboxy-4-methylthiazol-5(2H)-ylidene]ethyl phosphate binding site. A 4-amino-2-methyl-5-(diphosphooxymethyl)pyrimidine-binding site is contributed by lysine 138. Glycine 166 is a binding site for 2-[(2R,5Z)-2-carboxy-4-methylthiazol-5(2H)-ylidene]ethyl phosphate.

The protein belongs to the thiamine-phosphate synthase family. Requires Mg(2+) as cofactor.

It catalyses the reaction 2-[(2R,5Z)-2-carboxy-4-methylthiazol-5(2H)-ylidene]ethyl phosphate + 4-amino-2-methyl-5-(diphosphooxymethyl)pyrimidine + 2 H(+) = thiamine phosphate + CO2 + diphosphate. The enzyme catalyses 2-(2-carboxy-4-methylthiazol-5-yl)ethyl phosphate + 4-amino-2-methyl-5-(diphosphooxymethyl)pyrimidine + 2 H(+) = thiamine phosphate + CO2 + diphosphate. It carries out the reaction 4-methyl-5-(2-phosphooxyethyl)-thiazole + 4-amino-2-methyl-5-(diphosphooxymethyl)pyrimidine + H(+) = thiamine phosphate + diphosphate. Its pathway is cofactor biosynthesis; thiamine diphosphate biosynthesis; thiamine phosphate from 4-amino-2-methyl-5-diphosphomethylpyrimidine and 4-methyl-5-(2-phosphoethyl)-thiazole: step 1/1. Condenses 4-methyl-5-(beta-hydroxyethyl)thiazole monophosphate (THZ-P) and 2-methyl-4-amino-5-hydroxymethyl pyrimidine pyrophosphate (HMP-PP) to form thiamine monophosphate (TMP). The protein is Thiamine-phosphate synthase of Salinispora arenicola (strain CNS-205).